A 51-amino-acid chain; its full sequence is Insulin (51 aa).

Disulfide bonds link Cys8–Cys37, Cys20–Cys50, and Cys36–Cys41.

It belongs to the insulin family. In terms of assembly, heterodimer of a B chain and an A chain linked by two disulfide bonds.

It is found in the secreted. Insulin decreases blood glucose concentration. It increases cell permeability to monosaccharides, amino acids and fatty acids. It accelerates glycolysis, the pentose phosphate cycle, and glycogen synthesis in liver. This Platichthys flesus (European flounder) protein is Insulin (ins).